We begin with the raw amino-acid sequence, 40 residues long: Large ribosomal subunit protein bL36B (40 aa).

Belongs to the bacterial ribosomal protein bL36 family.

The protein is Large ribosomal subunit protein bL36B of Clavibacter michiganensis subsp. michiganensis (strain NCPPB 382).